We begin with the raw amino-acid sequence, 318 residues long: 2-keto-3-deoxygluconate permease (318 aa).

10 helical membrane passes run 10–30 (IPGG…TFTP), 42–62 (GLIT…GASI), 76–96 (VLVV…GTFL), 105–125 (MLAG…NGGL), 139–159 (AGAF…VILG), 163–183 (IATF…IGFA), 199–219 (VQTL…LSVI), 224–244 (FAGI…LILA), 263–283 (AGAA…FAPV), and 289–309 (ALVA…TALW).

It belongs to the KdgT transporter family.

The protein localises to the cell inner membrane. It catalyses the reaction 2-dehydro-3-deoxy-D-gluconate(in) + H(+)(in) = 2-dehydro-3-deoxy-D-gluconate(out) + H(+)(out). Its function is as follows. Catalyzes the proton-dependent uptake of 2-keto-3-deoxygluconate (KDG) into the cell. In Pectobacterium carotovorum subsp. carotovorum (Erwinia carotovora subsp. carotovora), this protein is 2-keto-3-deoxygluconate permease.